The primary structure comprises 356 residues: Ferredoxin--NADP reductase (356 aa).

FAD is bound by residues Thr-25, Glu-44, Gln-52, Tyr-57, Val-97, Phe-132, Asp-298, and Ser-339.

The protein belongs to the ferredoxin--NADP reductase type 2 family. As to quaternary structure, homodimer. The cofactor is FAD.

It carries out the reaction 2 reduced [2Fe-2S]-[ferredoxin] + NADP(+) + H(+) = 2 oxidized [2Fe-2S]-[ferredoxin] + NADPH. In Chlorobaculum parvum (strain DSM 263 / NCIMB 8327) (Chlorobium vibrioforme subsp. thiosulfatophilum), this protein is Ferredoxin--NADP reductase.